Consider the following 61-residue polypeptide: Metallothionein-2 (61 aa).

N-acetylmethionine is present on M1. The segment at 1 to 29 (MDPNCSCATDGSCSCAGSCKCKECKCTTC) is beta. Residues C5, C7, C13, C15, C19, C21, C24, C26, C29, C33, C34, C36, C37, C41, C44, C48, C50, and C57 each contribute to the a divalent metal cation site. Residues 30 to 61 (KKSCCSCCPVGCAKCSQGCVCKEASDKCSCCA) form an alpha region. A Phosphoserine modification is found at S58. The a divalent metal cation site is built by C59 and C60.

This sequence belongs to the metallothionein superfamily. Type 1 family.

Its function is as follows. Metallothioneins have a high content of cysteine residues that bind various heavy metals; these proteins are transcriptionally regulated by both heavy metals and glucocorticoids. The polypeptide is Metallothionein-2 (MT2) (Cricetulus griseus (Chinese hamster)).